The primary structure comprises 161 residues: MTTPAQDAPLVFPSVAFRPVRLFFINVGLAAVAMLVAGVFGHLTVGMFLGLGLLLGLLNALLVRRSAESITAKEHPLKRSMALNSASRLAIITILGLIIAYIFRPAGLGVVFGLAFFQVLLVATTALPVLKKLRTATEEPVATYSSNGQTGGSEGRSASDD.

The next 4 membrane-spanning stretches (helical) occupy residues 22-42, 43-63, 89-109, and 110-130; these read LFFI…VFGH, LTVG…ALLV, LAII…AGLG, and VVFG…LPVL. The disordered stretch occupies residues 141–161; the sequence is VATYSSNGQTGGSEGRSASDD.

This sequence to M.leprae ML1138.

The protein localises to the cell membrane. This is an uncharacterized protein from Mycobacterium bovis (strain ATCC BAA-935 / AF2122/97).